A 61-amino-acid polypeptide reads, in one-letter code: Small ribosomal subunit protein uS14 (61 aa).

4 residues coordinate Zn(2+): cysteine 24, cysteine 27, cysteine 40, and cysteine 43.

Belongs to the universal ribosomal protein uS14 family. Zinc-binding uS14 subfamily. As to quaternary structure, part of the 30S ribosomal subunit. Contacts proteins S3 and S10. Zn(2+) serves as cofactor.

In terms of biological role, binds 16S rRNA, required for the assembly of 30S particles and may also be responsible for determining the conformation of the 16S rRNA at the A site. The protein is Small ribosomal subunit protein uS14 of Halalkalibacterium halodurans (strain ATCC BAA-125 / DSM 18197 / FERM 7344 / JCM 9153 / C-125) (Bacillus halodurans).